The primary structure comprises 1155 residues: ATP-dependent helicase/deoxyribonuclease subunit B (1155 aa).

A UvrD-like helicase ATP-binding domain is found at M1–H300. G8–S15 serves as a coordination point for ATP. A UvrD-like helicase C-terminal domain is found at T280–N590. Positions 792, 1111, 1114, and 1120 each coordinate [4Fe-4S] cluster.

Belongs to the helicase family. AddB/RexB type 1 subfamily. As to quaternary structure, heterodimer of AddA and AddB. Mg(2+) is required as a cofactor. The cofactor is [4Fe-4S] cluster.

Functionally, the heterodimer acts as both an ATP-dependent DNA helicase and an ATP-dependent, dual-direction single-stranded exonuclease. Recognizes the chi site generating a DNA molecule suitable for the initiation of homologous recombination. The AddB subunit has 5' -&gt; 3' nuclease activity but not helicase activity. This chain is ATP-dependent helicase/deoxyribonuclease subunit B, found in Desulforamulus reducens (strain ATCC BAA-1160 / DSM 100696 / MI-1) (Desulfotomaculum reducens).